The chain runs to 334 residues: Methionyl-tRNA formyltransferase (334 aa).

Position 111 to 114 (111 to 114) interacts with (6S)-5,6,7,8-tetrahydrofolate; the sequence is SILP.

This sequence belongs to the Fmt family.

The catalysed reaction is L-methionyl-tRNA(fMet) + (6R)-10-formyltetrahydrofolate = N-formyl-L-methionyl-tRNA(fMet) + (6S)-5,6,7,8-tetrahydrofolate + H(+). Attaches a formyl group to the free amino group of methionyl-tRNA(fMet). The formyl group appears to play a dual role in the initiator identity of N-formylmethionyl-tRNA by promoting its recognition by IF2 and preventing the misappropriation of this tRNA by the elongation apparatus. In Trichormus variabilis (strain ATCC 29413 / PCC 7937) (Anabaena variabilis), this protein is Methionyl-tRNA formyltransferase.